Reading from the N-terminus, the 334-residue chain is Fructose-1,6-bisphosphatase class 1 (334 aa).

Mg(2+)-binding residues include Glu90, Asp113, Leu115, and Asp116. Substrate contacts are provided by residues 116-119, Asn209, Tyr242, and Lys272; that span reads DGSS. Glu278 is a binding site for Mg(2+).

This sequence belongs to the FBPase class 1 family. As to quaternary structure, homotetramer. Mg(2+) is required as a cofactor.

The protein resides in the cytoplasm. It carries out the reaction beta-D-fructose 1,6-bisphosphate + H2O = beta-D-fructose 6-phosphate + phosphate. It functions in the pathway carbohydrate biosynthesis; gluconeogenesis. This chain is Fructose-1,6-bisphosphatase class 1, found in Actinobacillus pleuropneumoniae serotype 5b (strain L20).